Consider the following 102-residue polypeptide: Phosphoribosyl-ATP pyrophosphatase (102 aa).

The protein belongs to the PRA-PH family.

It localises to the cytoplasm. It carries out the reaction 1-(5-phospho-beta-D-ribosyl)-ATP + H2O = 1-(5-phospho-beta-D-ribosyl)-5'-AMP + diphosphate + H(+). It functions in the pathway amino-acid biosynthesis; L-histidine biosynthesis; L-histidine from 5-phospho-alpha-D-ribose 1-diphosphate: step 2/9. This Jannaschia sp. (strain CCS1) protein is Phosphoribosyl-ATP pyrophosphatase.